Consider the following 152-residue polypeptide: Deoxyuridine 5'-triphosphate nucleotidohydrolase (152 aa).

Substrate is bound by residues 71-73 (RSG), N84, 88-90 (LID), and M98.

It belongs to the dUTPase family. Mg(2+) serves as cofactor.

It catalyses the reaction dUTP + H2O = dUMP + diphosphate + H(+). Its pathway is pyrimidine metabolism; dUMP biosynthesis; dUMP from dCTP (dUTP route): step 2/2. Functionally, this enzyme is involved in nucleotide metabolism: it produces dUMP, the immediate precursor of thymidine nucleotides and it decreases the intracellular concentration of dUTP so that uracil cannot be incorporated into DNA. The sequence is that of Deoxyuridine 5'-triphosphate nucleotidohydrolase from Coxiella burnetii (strain Dugway 5J108-111).